Here is a 438-residue protein sequence, read N- to C-terminus: UDP-N-acetylmuramoylalanine--D-glutamate ligase (438 aa).

112–118 (GSNGKST) contacts ATP.

The protein belongs to the MurCDEF family.

It is found in the cytoplasm. The catalysed reaction is UDP-N-acetyl-alpha-D-muramoyl-L-alanine + D-glutamate + ATP = UDP-N-acetyl-alpha-D-muramoyl-L-alanyl-D-glutamate + ADP + phosphate + H(+). It functions in the pathway cell wall biogenesis; peptidoglycan biosynthesis. Its function is as follows. Cell wall formation. Catalyzes the addition of glutamate to the nucleotide precursor UDP-N-acetylmuramoyl-L-alanine (UMA). This Salmonella paratyphi A (strain ATCC 9150 / SARB42) protein is UDP-N-acetylmuramoylalanine--D-glutamate ligase.